The sequence spans 307 residues: GTPase Era (307 aa).

In terms of domain architecture, Era-type G spans 14-184; the sequence is HSGFVAIVGK…REQILDILPE (171 aa). Residues 22-29 form a G1 region; sequence GKPNVGKS. Residue 22 to 29 participates in GTP binding; sequence GKPNVGKS. The G2 stretch occupies residues 48 to 52; it reads QTTRR. Positions 69-72 are G3; that stretch reads DTPG. Residues 69 to 73 and 131 to 134 each bind GTP; these read DTPGL and NKTD. Residues 131–134 are G4; sequence NKTD. The segment at 162 to 164 is G5; sequence LSA. In terms of domain architecture, KH type-2 spans 215–292; that stretch reads LREELPYAVA…FLGLEVIVIP (78 aa).

The protein belongs to the TRAFAC class TrmE-Era-EngA-EngB-Septin-like GTPase superfamily. Era GTPase family. Monomer.

It localises to the cytoplasm. The protein resides in the cell membrane. In terms of biological role, an essential GTPase that binds both GDP and GTP, with rapid nucleotide exchange. Plays a role in 16S rRNA processing and 30S ribosomal subunit biogenesis and possibly also in cell cycle regulation and energy metabolism. The chain is GTPase Era from Deinococcus deserti (strain DSM 17065 / CIP 109153 / LMG 22923 / VCD115).